A 214-amino-acid polypeptide reads, in one-letter code: Protein-L-isoaspartate O-methyltransferase (214 aa).

The active site involves S63.

This sequence belongs to the methyltransferase superfamily. L-isoaspartyl/D-aspartyl protein methyltransferase family.

The protein resides in the cytoplasm. The catalysed reaction is [protein]-L-isoaspartate + S-adenosyl-L-methionine = [protein]-L-isoaspartate alpha-methyl ester + S-adenosyl-L-homocysteine. Its function is as follows. Catalyzes the methyl esterification of L-isoaspartyl residues in peptides and proteins that result from spontaneous decomposition of normal L-aspartyl and L-asparaginyl residues. It plays a role in the repair and/or degradation of damaged proteins. The protein is Protein-L-isoaspartate O-methyltransferase of Desulfotalea psychrophila (strain LSv54 / DSM 12343).